The sequence spans 384 residues: Adaptive-response sensory kinase SasA (384 aa).

Residues 162–384 (MLAHDLRSPL…SFHFTLPVYR (223 aa)) enclose the Histidine kinase domain. H165 bears the Phosphohistidine; by autocatalysis mark.

Homooligomerizes. Interacts with KaiC. Participates in the KaiABC clock complex, whose core is composed of a KaiC homohexamer, 6 KaiB and up to 6 KaiA dimers. SasA and KaiB(fs) compete to bind to KaiC.

It catalyses the reaction ATP + protein L-histidine = ADP + protein N-phospho-L-histidine.. Functionally, member of the two-component regulatory system SasA/RpaA involved in genome-wide circadian gene expression. One of several clock output pathways. Participates in the Kai clock protein complex, the main circadian regulator in cyanobacteria, via its interaction with KaiC. KaiC enhances the autophosphorylation activity of SasA, which then transfers its phosphate group to RpaA to activate it. In addition to its output function, recruits fold-shifted KaiB (KaiB(fs)) to KaiC to cooperatively form the KaiB(6):KaiC(6) complex (independent of SasA kinase activity). Required for robustness of the circadian rhythm of gene expression and is involved in clock output, also required for adaptation to light/dark cycles. This chain is Adaptive-response sensory kinase SasA, found in Microcystis aeruginosa (strain NIES-843 / IAM M-2473).